Consider the following 435-residue polypeptide: Trigger factor (435 aa).

The region spanning 163–248 (DDITLIDFTG…INEIKRKELA (86 aa)) is the PPIase FKBP-type domain.

The protein belongs to the FKBP-type PPIase family. Tig subfamily.

The protein resides in the cytoplasm. The enzyme catalyses [protein]-peptidylproline (omega=180) = [protein]-peptidylproline (omega=0). Its function is as follows. Involved in protein export. Acts as a chaperone by maintaining the newly synthesized protein in an open conformation. Functions as a peptidyl-prolyl cis-trans isomerase. The chain is Trigger factor from Desulforamulus reducens (strain ATCC BAA-1160 / DSM 100696 / MI-1) (Desulfotomaculum reducens).